Here is a 126-residue protein sequence, read N- to C-terminus: B3 domain-containing protein At5g54067 (126 aa).

A DNA-binding region (TF-B3) is located at residues 20-118; it reads SDIVGNVVLP…KFVVLNFQYS (99 aa).

Its subcellular location is the nucleus. The sequence is that of B3 domain-containing protein At5g54067 from Arabidopsis thaliana (Mouse-ear cress).